A 403-amino-acid chain; its full sequence is Queuine tRNA-ribosyltransferase catalytic subunit 1 (403 aa).

A2 is modified (N-acetylalanine). D105 functions as the Proton acceptor in the catalytic mechanism. Queuine is bound at residue 105–109; it reads DSGGF. S139 is subject to Phosphoserine. The queuine site is built by D159, Q202, and G229. An RNA binding region spans residues 260–266; sequence GVGYATD. Catalysis depends on D279, which acts as the Nucleophile. The tract at residues 284-288 is RNA binding; important for wobble base 34 recognition; the sequence is TRTAR. 4 residues coordinate Zn(2+): C317, C319, C322, and H348.

The protein belongs to the queuine tRNA-ribosyltransferase family. Heterodimer of a catalytic subunit QTRT1 and an accessory subunit QTRT2. Zn(2+) is required as a cofactor. As to expression, expressed in brain, heart, kidney, liver, ling, skeletal muscle, spleen and testis.

Its subcellular location is the cytoplasm. The protein localises to the mitochondrion outer membrane. It is found in the nucleus. The enzyme catalyses guanosine(34) in tRNA + queuine = queuosine(34) in tRNA + guanine. Catalytic subunit of the queuine tRNA-ribosyltransferase (TGT) that catalyzes the base-exchange of a guanine (G) residue with queuine (Q) at position 34 (anticodon wobble position) in tRNAs with GU(N) anticodons (tRNA-Asp, -Asn, -His and -Tyr), resulting in the hypermodified nucleoside queuosine (7-(((4,5-cis-dihydroxy-2-cyclopenten-1-yl)amino)methyl)-7-deazaguanosine). Catalysis occurs through a double-displacement mechanism. The nucleophile active site attacks the C1' of nucleotide 34 to detach the guanine base from the RNA, forming a covalent enzyme-RNA intermediate. The proton acceptor active site deprotonates the incoming queuine, allowing a nucleophilic attack on the C1' of the ribose to form the product. Modification of cytoplasmic tRNAs with queuosine controls the elongation speed of cognate codons, thereby ensuring the correct folding of nascent proteins to maintain proteome integrity. This Mus musculus (Mouse) protein is Queuine tRNA-ribosyltransferase catalytic subunit 1.